Consider the following 223-residue polypeptide: MKRN2 opposite strand protein (223 aa).

This chain is MKRN2 opposite strand protein (MKRN2OS), found in Homo sapiens (Human).